The primary structure comprises 429 residues: Ribosomal RNA small subunit methyltransferase B (429 aa).

Residues 254-260 (CAAPGGK), Asp-277, Asp-303, and Asp-322 contribute to the S-adenosyl-L-methionine site. Cys-375 functions as the Nucleophile in the catalytic mechanism.

The protein belongs to the class I-like SAM-binding methyltransferase superfamily. RsmB/NOP family.

The protein localises to the cytoplasm. It catalyses the reaction cytidine(967) in 16S rRNA + S-adenosyl-L-methionine = 5-methylcytidine(967) in 16S rRNA + S-adenosyl-L-homocysteine + H(+). Functionally, specifically methylates the cytosine at position 967 (m5C967) of 16S rRNA. The polypeptide is Ribosomal RNA small subunit methyltransferase B (Pectobacterium carotovorum subsp. carotovorum (strain PC1)).